Consider the following 426-residue polypeptide: Histone-binding protein RBBP7 (426 aa).

Residue A2 is modified to N-acetylalanine. S3 carries the post-translational modification Phosphoserine. At K4 the chain carries N6-acetyllysine; alternate. K4 participates in a covalent cross-link: Glycyl lysine isopeptide (Lys-Gly) (interchain with G-Cter in SUMO2); alternate. K4 participates in a covalent cross-link: Glycyl lysine isopeptide (Lys-Gly) (interchain with G-Cter in ubiquitin); alternate. T10 carries the post-translational modification Phosphothreonine. 7 WD repeats span residues Q47–H122, R128–R173, G181–D217, V228–D269, V275–F312, E318–H370, and I377–M404. A Phosphoserine modification is found at S95. A Glycyl lysine isopeptide (Lys-Gly) (interchain with G-Cter in SUMO2) cross-link involves residue K101. K119 is modified (N6-acetyllysine). A Glycyl lysine isopeptide (Lys-Gly) (interchain with G-Cter in SUMO2) cross-link involves residue K155. The residue at position 159 (K159) is an N6-acetyllysine; alternate. K159 participates in a covalent cross-link: Glycyl lysine isopeptide (Lys-Gly) (interchain with G-Cter in SUMO2); alternate. Residue S355 is modified to Phosphoserine.

The protein belongs to the WD repeat RBAP46/RBAP48/MSI1 family. Binds directly to helix 1 of the histone fold of histone H4, a region that is not accessible when H4 is in chromatin. Subunit of the type B histone acetyltransferase (HAT) complex, composed of RBBP7 and HAT1. Subunit of the core histone deacetylase (HDAC) complex, which is composed of HDAC1, HDAC2, RBBP4 and RBBP7. The core HDAC complex associates with SIN3A, ARID4B/SAP180, SAP18, SAP30, SAP130, SUDS3/SAP45 and possibly ARID4A/RBP1 and ING1 to form the SIN3 HDAC complex. Component of the nucleosome remodeling and deacetylase (NuRD) repressor complex, composed of core proteins MTA1, MTA2, MTA3, RBBP4, RBBP7, HDAC1, HDAC2, MBD2, MBD3, and peripherally associated proteins CDK2AP1, CDK2AP2, GATAD2A, GATAD2B, CHD3, CHD4 and CHD5. The exact stoichiometry of the NuRD complex is unknown, and some subunits such as MBD2 and MBD3, GATAD2A and GATAD2B, and CHD3, CHD4 and CHD5 define mutually exclusive NuRD complexes. The NuRD complex may interact with MBD3L1. The NuRD complex may interact with MBD3L2. Subunit of the PRC2/EED-EZH2 complex, which is composed of at least EED, EZH2, RBBP4, RBBP7 and SUZ12. The PRC2/EED-EZH2 complex may also associate with HDAC1. Component of the NURF-1 ISWI chromatin remodeling complex (also called the nucleosome-remodeling factor (NURF) complex) at least composed of SMARCA1, BPTF, RBBP4 and RBBP7. Within the complex interacts with SMARCA1. Component of the BPFT-SMARCA1 complex at least composed of SMARCA1, BPFT, RBBP4 and RBBP7; the complex is catalytically inactive and does not remodel chromatin. Within the complex interacts with SMARCA1. Interacts with BRCA1. Interacts with CDK2AP1. Interacts with CENPA. Interacts with CHD3. Interacts with CHD4. Interacts with CREBBP, and this interaction may be enhanced by the binding of phosphorylated CREB1 to CREBBP. Interacts with HDAC7. Interacts with MTA1. Interacts with PWWP2B. Interacts with RB1 (via viral protein-binding domain). Interacts with SUV39H1.

It localises to the nucleus. Its function is as follows. Core histone-binding subunit that may target chromatin remodeling factors, histone acetyltransferases and histone deacetylases to their histone substrates in a manner that is regulated by nucleosomal DNA. Component of several complexes which regulate chromatin metabolism. These include the type B histone acetyltransferase (HAT) complex, which is required for chromatin assembly following DNA replication; the core histone deacetylase (HDAC) complex, which promotes histone deacetylation and consequent transcriptional repression; the nucleosome remodeling and histone deacetylase complex (the NuRD complex), which promotes transcriptional repression by histone deacetylation and nucleosome remodeling; and the PRC2/EED-EZH2 complex, which promotes repression of homeotic genes during development; and the NURF (nucleosome remodeling factor) complex. The protein is Histone-binding protein RBBP7 (RBBP7) of Pongo abelii (Sumatran orangutan).